The sequence spans 272 residues: Bis(5'-nucleosyl)-tetraphosphatase, symmetrical (272 aa).

Belongs to the Ap4A hydrolase family.

It catalyses the reaction P(1),P(4)-bis(5'-adenosyl) tetraphosphate + H2O = 2 ADP + 2 H(+). In terms of biological role, hydrolyzes diadenosine 5',5'''-P1,P4-tetraphosphate to yield ADP. This Wigglesworthia glossinidia brevipalpis protein is Bis(5'-nucleosyl)-tetraphosphatase, symmetrical.